Here is a 793-residue protein sequence, read N- to C-terminus: PC3-like endoprotease variant A (793 aa).

An N-terminal signal peptide occupies residues 1–29; sequence MNYRGIYRRRYVFVLLLLVAVVNISYGWT. A propeptide spanning residues 30 to 152 is cleaved from the precursor; that stretch reads VLKNKDYKRR…QQKILERVKR (123 aa). Asparagine 62 and asparagine 190 each carry an N-linked (GlcNAc...) asparagine glycan. The Peptidase S8 domain maps to 164–486; that stretch reads MWYLLNTGQA…FGRLDANAMV (323 aa). Catalysis depends on charge relay system residues aspartate 202 and histidine 242. 2 disulfides stabilise this stretch: cysteine 259/cysteine 411 and cysteine 351/cysteine 381. The active-site Charge relay system is serine 419. The 144-residue stretch at 495-638 folds into the P/Homo B domain; sequence LPAQRKCTAA…EERVIDTQTK (144 aa). Cysteines 501 and 527 form a disulfide.

Belongs to the peptidase S8 family. Furin subfamily. Predominantly in the body column.

Functionally, probably involved in the processing of hormone and other protein precursors at sites comprised of pairs of basic amino acid residues. The polypeptide is PC3-like endoprotease variant A (Hydra vulgaris (Hydra)).